The primary structure comprises 252 residues: Phosphoglycolate phosphatase (252 aa).

The active-site Nucleophile is the aspartate 13. The Mg(2+) site is built by aspartate 13, aspartate 15, and aspartate 192.

Belongs to the HAD-like hydrolase superfamily. CbbY/CbbZ/Gph/YieH family. In terms of assembly, monomer. Mg(2+) serves as cofactor. Requires chloride as cofactor.

It carries out the reaction 2-phosphoglycolate + H2O = glycolate + phosphate. The protein operates within organic acid metabolism; glycolate biosynthesis; glycolate from 2-phosphoglycolate: step 1/1. Its function is as follows. Specifically catalyzes the dephosphorylation of 2-phosphoglycolate. Is involved in the dissimilation of the intracellular 2-phosphoglycolate formed during the DNA repair of 3'-phosphoglycolate ends, a major class of DNA lesions induced by oxidative stress. The polypeptide is Phosphoglycolate phosphatase (Shigella boydii serotype 4 (strain Sb227)).